The chain runs to 132 residues: Fatty acid-binding protein, adipocyte (132 aa).

Cysteine 2 bears the N-acetylcysteine mark. Position 13 is a phosphoserine (serine 13). Tyrosine 20 carries the phosphotyrosine; by Tyr-kinases modification. Positions 22 to 32 (KEVGVGFATRK) match the Nuclear localization signal motif. 127-129 (RVY) serves as a coordination point for a fatty acid.

The protein belongs to the calycin superfamily. Fatty-acid binding protein (FABP) family. Monomer. Homodimer. Interacts with PPARG.

Its subcellular location is the cytoplasm. The protein resides in the nucleus. Functionally, lipid transport protein in adipocytes. Binds both long chain fatty acids and retinoic acid. Delivers long-chain fatty acids and retinoic acid to their cognate receptors in the nucleus. FABPs are important elements related to the hibernating state in mammals. This is Fatty acid-binding protein, adipocyte (FABP4) from Ictidomys tridecemlineatus (Thirteen-lined ground squirrel).